A 1079-amino-acid polypeptide reads, in one-letter code: Eukaryotic translation initiation factor 5B (1079 aa).

Residues 1-478 (MGKKGKKSGY…QAAPAESNVS (478 aa)) form a disordered region. Positions 22 to 38 (SGQNEYLDNTSQDSPQN) are enriched in polar residues. Residues 57-67 (SKKKKGKKNKG) are compositionally biased toward basic residues. 3 positions are modified to phosphoserine: Ser-73, Ser-77, and Ser-82. The segment covering 105–114 (KKGKKGKKSK) has biased composition (basic residues). Ser-127 bears the Phosphoserine mark. The segment covering 160 to 169 (NNNESEAAAP) has biased composition (low complexity). The segment covering 173-192 (PEVRVKTKKEKEREKKEREK) has biased composition (basic and acidic residues). A compositionally biased stretch (basic residues) spans 193–204 (LRKKQQQAKKKG). The segment covering 207–233 (GEDTLASSEVSSEVDISTPAENDSSAK) has biased composition (polar residues). The span at 253–293 (MLEEKRAREEEEQRIREEEARIAEEEKRLAEVEEARKEEAR) shows a compositional bias: basic and acidic residues. Low complexity-rich tracts occupy residues 321–334 (QQAL…QMLE) and 361–376 (RSGT…LESS). Position 364 is a phosphothreonine (Thr-364). The span at 385–408 (EPQKDSKDDSEKVEKETEVERKEE) shows a compositional bias: basic and acidic residues. Positions 409–431 (NEAEAEAVFDDWEAALEEPEVAE) are enriched in acidic residues. The span at 436–466 (VTEKKETDIKSDAVEHSIKDKEDSKTDKVDD) shows a compositional bias: basic and acidic residues. Residues 482-700 (LRSPICCILG…LISLTQTRMS (219 aa)) enclose the tr-type G domain. Residues 491-498 (GHVDTGKT) form a G1 region. 491–498 (GHVDTGKT) is a GTP binding site. The tract at residues 516–520 (GITQQ) is G2. The tract at residues 555-558 (DTPG) is G3. The interval 609-612 (NKVD) is G4. The interval 677–679 (SAQ) is G5.

The protein belongs to the TRAFAC class translation factor GTPase superfamily. Classic translation factor GTPase family. IF-2 subfamily. A monovalent cation serves as cofactor.

It localises to the cytoplasm. The enzyme catalyses GTP + H2O = GDP + phosphate + H(+). Its function is as follows. Plays a role in translation initiation. Translational GTPase that catalyzes the joining of the 40S and 60S subunits to form the 80S initiation complex with the initiator methionine-tRNA in the P-site base paired to the start codon. GTP binding and hydrolysis induces conformational changes in the enzyme that renders it active for productive interactions with the ribosome. The release of the enzyme after formation of the initiation complex is a prerequisite to form elongation-competent ribosomes. This chain is Eukaryotic translation initiation factor 5B, found in Schizosaccharomyces pombe (strain 972 / ATCC 24843) (Fission yeast).